We begin with the raw amino-acid sequence, 464 residues long: Olfactomedin (464 aa).

A signal peptide spans 1–16 (MYICLLTLVLIHAAAA). Asparagine 21, asparagine 85, asparagine 143, asparagine 228, asparagine 279, and asparagine 383 each carry an N-linked (GlcNAc...) asparagine glycan. One can recognise an Olfactomedin-like domain in the interval 192–464 (SCQHQGLAHI…LLHYDIALKP (273 aa)). Cysteines 193 and 394 form a disulfide.

Oligomer; disulfide-linked. Post-translationally, most, if not all, of the six potential sites for N-glycosylation carry carbohydrate moieties of 8-10 sugar residues. In terms of tissue distribution, expressed exclusively in olfactory neuroepithelium.

The protein localises to the secreted. It is found in the extracellular space. Functionally, may influence the maintenance, growth, or differentiation of chemosensory cilia on the apical dendrites of olfactory neurons. Major component of the extracellular matrix of the olfactory neuroepithelium. The chain is Olfactomedin from Aquarana catesbeiana (American bullfrog).